Reading from the N-terminus, the 359-residue chain is Membrane-bound lytic murein transglycosylase C (359 aa).

Positions 1 to 16 (MKKYLALALIAPLLIS) are cleaved as a signal peptide. The N-palmitoyl cysteine moiety is linked to residue cysteine 17. Cysteine 17 is lipidated: S-diacylglycerol cysteine.

It belongs to the transglycosylase Slt family.

It localises to the cell outer membrane. The catalysed reaction is Exolytic cleavage of the (1-&gt;4)-beta-glycosidic linkage between N-acetylmuramic acid (MurNAc) and N-acetylglucosamine (GlcNAc) residues in peptidoglycan, from either the reducing or the non-reducing ends of the peptidoglycan chains, with concomitant formation of a 1,6-anhydrobond in the MurNAc residue.. Functionally, murein-degrading enzyme. May play a role in recycling of muropeptides during cell elongation and/or cell division. The protein is Membrane-bound lytic murein transglycosylase C of Escherichia coli O8 (strain IAI1).